Consider the following 72-residue polypeptide: UPF0154 protein BLi02038/BL02936 (72 aa).

The helical transmembrane segment at 4–24 (WVVILVGVLALLAGVALGFFI) threads the bilayer.

This sequence belongs to the UPF0154 family.

The protein resides in the cell membrane. The polypeptide is UPF0154 protein BLi02038/BL02936 (Bacillus licheniformis (strain ATCC 14580 / DSM 13 / JCM 2505 / CCUG 7422 / NBRC 12200 / NCIMB 9375 / NCTC 10341 / NRRL NRS-1264 / Gibson 46)).